The sequence spans 157 residues: Ribonuclease H (157 aa).

Residues 5–146 (IMKQVEIFTD…CDDLARTAAE (142 aa)) enclose the RNase H type-1 domain. Mg(2+) contacts are provided by Asp-14, Glu-52, Asp-74, and Asp-138.

Belongs to the RNase H family. As to quaternary structure, monomer. Mg(2+) serves as cofactor.

It localises to the cytoplasm. It catalyses the reaction Endonucleolytic cleavage to 5'-phosphomonoester.. Endonuclease that specifically degrades the RNA of RNA-DNA hybrids. In Aliivibrio salmonicida (strain LFI1238) (Vibrio salmonicida (strain LFI1238)), this protein is Ribonuclease H.